Here is a 269-residue protein sequence, read N- to C-terminus: Glutamate racemase (269 aa).

Residues 11-12 and 43-44 each bind substrate; these read DS and YG. The active-site Proton donor/acceptor is Cys74. A substrate-binding site is contributed by 75 to 76; it reads NT. Cys185 (proton donor/acceptor) is an active-site residue. 186–187 is a binding site for substrate; it reads TH.

It belongs to the aspartate/glutamate racemases family.

The catalysed reaction is L-glutamate = D-glutamate. It participates in cell wall biogenesis; peptidoglycan biosynthesis. Provides the (R)-glutamate required for cell wall biosynthesis. This Bacillus cereus (strain ATCC 10987 / NRS 248) protein is Glutamate racemase.